Consider the following 404-residue polypeptide: Glucose-1-phosphate adenylyltransferase (404 aa).

Residues tyrosine 99, glycine 164, 179-180, and serine 197 contribute to the alpha-D-glucose 1-phosphate site; that span reads EK.

The protein belongs to the bacterial/plant glucose-1-phosphate adenylyltransferase family.

The catalysed reaction is alpha-D-glucose 1-phosphate + ATP + H(+) = ADP-alpha-D-glucose + diphosphate. It functions in the pathway glycan biosynthesis; glycogen biosynthesis. In terms of biological role, involved in the biosynthesis of ADP-glucose building block, required in the biosynthesis of maltose-1-phosphate (M1P) and in the elongation reactions to produce linear alpha-1,4-glucans. Catalyzes the reaction between ATP and alpha-D-glucose 1-phosphate (G1P) to produce pyrophosphate and ADP-Glc. This chain is Glucose-1-phosphate adenylyltransferase, found in Mycolicibacterium smegmatis (strain ATCC 700084 / mc(2)155) (Mycobacterium smegmatis).